The chain runs to 535 residues: 2-isopropylmalate synthase (535 aa).

In terms of domain architecture, Pyruvate carboxyltransferase spans 13 to 274 (VLIFDTTLRD…YFNPFLGRPP (262 aa)). Residues D22, H213, H215, and N249 each coordinate Mn(2+). The tract at residues 414 to 535 (QLEFVQVSCG…LEQRALHPQA (122 aa)) is regulatory domain.

It belongs to the alpha-IPM synthase/homocitrate synthase family. LeuA type 1 subfamily. As to quaternary structure, homodimer. The cofactor is Mn(2+).

It localises to the cytoplasm. The enzyme catalyses 3-methyl-2-oxobutanoate + acetyl-CoA + H2O = (2S)-2-isopropylmalate + CoA + H(+). The protein operates within amino-acid biosynthesis; L-leucine biosynthesis; L-leucine from 3-methyl-2-oxobutanoate: step 1/4. Catalyzes the condensation of the acetyl group of acetyl-CoA with 3-methyl-2-oxobutanoate (2-ketoisovalerate) to form 3-carboxy-3-hydroxy-4-methylpentanoate (2-isopropylmalate). In Thermosynechococcus vestitus (strain NIES-2133 / IAM M-273 / BP-1), this protein is 2-isopropylmalate synthase.